Reading from the N-terminus, the 1512-residue chain is DNA polymerase (1512 aa).

It belongs to the DNA polymerase type-B family.

It is found in the host nucleus. The enzyme catalyses DNA(n) + a 2'-deoxyribonucleoside 5'-triphosphate = DNA(n+1) + diphosphate. This is DNA polymerase (57/58) from Ictalurid herpesvirus 1 (strain Auburn) (IcHV-1).